Reading from the N-terminus, the 125-residue chain is PCNA-associated factor (125 aa).

The tract at residues 1 to 125 (MVRTKADSAG…SEEAADSDDE (125 aa)) is disordered. Over residues 8–17 (SAGSSASSGS) the composition is skewed to low complexity. Residues 28–39 (RKTFGSSSSGSN) carry the D-box motif. Positions 68–79 (QKGIGEFFGSPS) match the PIP-box motif. The KEN box signature appears at 85 to 87 (KEN). The short motif at 95–107 (EAGGSGAGKAPRK) is the Initiation motif element. Acidic residues predominate over residues 115–125 (PSEEAADSDDE).

In terms of assembly, interacts with pcna.

The protein localises to the nucleus. The protein resides in the cytoplasm. It is found in the perinuclear region. In terms of biological role, PCNA-binding protein that acts as a regulator of DNA repair during DNA replication. Following DNA damage, the interaction with pcna is disrupted, facilitating the interaction between monoubiquitinated pcna and the translesion DNA synthesis DNA polymerase eta (polh) at stalled replisomes, facilitating the bypass of replication-fork-blocking lesions. Also acts as a regulator of centrosome number. The sequence is that of PCNA-associated factor from Xenopus tropicalis (Western clawed frog).